Reading from the N-terminus, the 257-residue chain is MLAKRIIPCLDVRDGQVVKGVQFRNHEIIGDIVPLAKRYAEEGADELVFYDITASSDGRTVDKSWVERVAEVIDIPFCVAGGIKTIADAEQIFAFGADKISINSPALADPNLITALADRFGVQAIVVGIDSWFEKETGKYWVNQYTGDESRTRQTNWQLLDWVKEVQQRGAGEIVLNMMNQDGVRNGYDLVQLKKVREVCKVPLIASGGAGETVHFRDAFVEANVDGALAASVFHKQIINIGELKAYLTKEGVEIRR.

Active-site residues include D11 and D130.

This sequence belongs to the HisA/HisF family. In terms of assembly, heterodimer of HisH and HisF.

It localises to the cytoplasm. It catalyses the reaction 5-[(5-phospho-1-deoxy-D-ribulos-1-ylimino)methylamino]-1-(5-phospho-beta-D-ribosyl)imidazole-4-carboxamide + L-glutamine = D-erythro-1-(imidazol-4-yl)glycerol 3-phosphate + 5-amino-1-(5-phospho-beta-D-ribosyl)imidazole-4-carboxamide + L-glutamate + H(+). Its pathway is amino-acid biosynthesis; L-histidine biosynthesis; L-histidine from 5-phospho-alpha-D-ribose 1-diphosphate: step 5/9. Its function is as follows. IGPS catalyzes the conversion of PRFAR and glutamine to IGP, AICAR and glutamate. The HisF subunit catalyzes the cyclization activity that produces IGP and AICAR from PRFAR using the ammonia provided by the HisH subunit. The polypeptide is Imidazole glycerol phosphate synthase subunit HisF (Actinobacillus succinogenes (strain ATCC 55618 / DSM 22257 / CCUG 43843 / 130Z)).